Here is a 155-residue protein sequence, read N- to C-terminus: Mediator of RNA polymerase II transcription subunit 21 (155 aa).

The tract at residues 29–73 is disordered; it reads QAPPSVPPGQHRVDTMPEIKGKAASENPQSNPPQPAEPPVPEKIS. Positions 39-51 are enriched in basic and acidic residues; that stretch reads HRVDTMPEIKGKA. Positions 58–69 are enriched in pro residues; that stretch reads SNPPQPAEPPVP. The stretch at 75–147 forms a coiled coil; it reads EQFNQDLKEF…EVLLKKVEDK (73 aa).

Belongs to the Mediator complex subunit 21 family. Component of the Mediator complex.

It localises to the nucleus. Functionally, component of the Mediator complex, a coactivator involved in the regulated transcription of nearly all RNA polymerase II-dependent genes. Mediator functions as a bridge to convey information from gene-specific regulatory proteins to the basal RNA polymerase II transcription machinery. Mediator is recruited to promoters by direct interactions with regulatory proteins and serves as a scaffold for the assembly of a functional preinitiation complex with RNA polymerase II and the general transcription factors. The sequence is that of Mediator of RNA polymerase II transcription subunit 21 (SRB7) from Phaeosphaeria nodorum (strain SN15 / ATCC MYA-4574 / FGSC 10173) (Glume blotch fungus).